The chain runs to 188 residues: Probable chorismate pyruvate-lyase (188 aa).

3 residues coordinate substrate: Arg-90, Leu-128, and Glu-175.

Belongs to the UbiC family.

The protein resides in the cytoplasm. It catalyses the reaction chorismate = 4-hydroxybenzoate + pyruvate. Its pathway is cofactor biosynthesis; ubiquinone biosynthesis. In terms of biological role, removes the pyruvyl group from chorismate, with concomitant aromatization of the ring, to provide 4-hydroxybenzoate (4HB) for the ubiquinone pathway. This chain is Probable chorismate pyruvate-lyase, found in Marinobacter nauticus (strain ATCC 700491 / DSM 11845 / VT8) (Marinobacter aquaeolei).